A 233-amino-acid chain; its full sequence is Purine nucleoside phosphorylase DeoD-type (233 aa).

His4 lines the a purine D-ribonucleoside pocket. Phosphate is bound by residues Gly20, Arg24, Arg43, and 87-90 (RIGT). A purine D-ribonucleoside-binding positions include 179–181 (EME) and 203–204 (SD). The active-site Proton donor is the Asp204.

The protein belongs to the PNP/UDP phosphorylase family. As to quaternary structure, homohexamer; trimer of homodimers.

The catalysed reaction is a purine D-ribonucleoside + phosphate = a purine nucleobase + alpha-D-ribose 1-phosphate. It carries out the reaction a purine 2'-deoxy-D-ribonucleoside + phosphate = a purine nucleobase + 2-deoxy-alpha-D-ribose 1-phosphate. Catalyzes the reversible phosphorolytic breakdown of the N-glycosidic bond in the beta-(deoxy)ribonucleoside molecules, with the formation of the corresponding free purine bases and pentose-1-phosphate. This is Purine nucleoside phosphorylase DeoD-type from Thermoanaerobacter pseudethanolicus (strain ATCC 33223 / 39E) (Clostridium thermohydrosulfuricum).